The primary structure comprises 72 residues: Putative sodium channel toxin Ts18 (72 aa).

An N-terminal signal peptide occupies residues 1-21 (MNFRFPFLLMITISLIGAVLT). Cystine bridges form between cysteine 38–cysteine 61, cysteine 47–cysteine 66, and cysteine 51–cysteine 68.

It belongs to the long (3 C-C) scorpion toxin superfamily. As to expression, expressed by the venom gland.

It is found in the secreted. Binds to sodium channels (Nav) and affects the channel activation process. The polypeptide is Putative sodium channel toxin Ts18 (Tityus serrulatus (Brazilian scorpion)).